Reading from the N-terminus, the 229-residue chain is Large ribosomal subunit protein uL1 (229 aa).

It belongs to the universal ribosomal protein uL1 family. As to quaternary structure, part of the 50S ribosomal subunit.

In terms of biological role, binds directly to 23S rRNA. The L1 stalk is quite mobile in the ribosome, and is involved in E site tRNA release. Protein L1 is also a translational repressor protein, it controls the translation of the L11 operon by binding to its mRNA. This chain is Large ribosomal subunit protein uL1, found in Leifsonia xyli subsp. xyli (strain CTCB07).